The chain runs to 252 residues: Serine/threonine phosphatase stp (252 aa).

A compositionally biased stretch (basic and acidic residues) spans 1 to 18; sequence MHAEFRTDRGRIRHHNED. Positions 1 to 23 are disordered; it reads MHAEFRTDRGRIRHHNEDNGGVF. Residues 2–242 enclose the PPM-type phosphatase domain; the sequence is HAEFRTDRGR…DNITVLLVER (241 aa). 4 residues coordinate Mn(2+): aspartate 36, glycine 37, aspartate 194, and aspartate 233.

It belongs to the PP2C family. It depends on Mn(2+) as a cofactor.

It is found in the cytoplasm. The protein localises to the membrane. It carries out the reaction O-phospho-L-seryl-[protein] + H2O = L-seryl-[protein] + phosphate. It catalyses the reaction O-phospho-L-threonyl-[protein] + H2O = L-threonyl-[protein] + phosphate. Functionally, protein phosphatase that dephosphorylates EF-Tu. The polypeptide is Serine/threonine phosphatase stp (stp) (Listeria monocytogenes serotype 4b (strain F2365)).